The chain runs to 135 residues: Large ribosomal subunit protein eL32 (135 aa).

This sequence belongs to the eukaryotic ribosomal protein eL32 family.

This is Large ribosomal subunit protein eL32 (rpl32e) from Methanococcus vannielii.